The sequence spans 163 residues: MSSEHHAPIRATVEPVVAAAGLHLEECELKGQGATRTLQVLVDLPDGTEALGLDRVAAVAQEISDALDRDDPVPGPPYELEVSSPGATRTLETPRHWRRTVGHLVRIRTLEGERYTARLLEAHEDHAVVQRSHQPKKGMPVKLLDPERVDYASIRTARSEVEN.

The tract at residues 66 to 85 is disordered; the sequence is ALDRDDPVPGPPYELEVSSP.

Belongs to the RimP family.

The protein localises to the cytoplasm. In terms of biological role, required for maturation of 30S ribosomal subunits. The polypeptide is Ribosome maturation factor RimP (Kocuria rhizophila (strain ATCC 9341 / DSM 348 / NBRC 103217 / DC2201)).